A 50-amino-acid polypeptide reads, in one-letter code: Large ribosomal subunit protein bL33B (50 aa).

Belongs to the bacterial ribosomal protein bL33 family.

This chain is Large ribosomal subunit protein bL33B, found in Streptococcus pneumoniae (strain ATCC BAA-255 / R6).